The following is a 499-amino-acid chain: Multiphosphoryl transfer protein (499 aa).

The 141-residue stretch at 2–142 folds into the PTS EIIA type-2 domain; it reads LELSESNIHL…AEFCAILMGE (141 aa). The active-site Tele-phosphohistidine intermediate; for EIIA activity is the histidine 62. Histidine 62 carries the phosphohistidine; by HPr modification. The tract at residues 155-285 is m domain; sequence SLDVNTQSLL…SDVETQSVEG (131 aa). The 91-residue stretch at 286 to 376 folds into the HPr 1 domain; sequence AVVGTFTIRN…KAIANGLGEN (91 aa). Histidine 300 acts as the Pros-phosphohistidine intermediate; for HPr 1 activity in catalysis. Histidine 300 is subject to Phosphohistidine. The linker stretch occupies residues 378-409; that stretch reads SAVPPSEPDTIEIMGDQIHTPAVTEDDNLPAN. Positions 410 to 499 constitute an HPr 2 domain; it reads AIEAVFVIKN…GAVIESGLGE (90 aa). Histidine 424 bears the Phosphohistidine mark. Histidine 424 serves as the catalytic Pros-phosphohistidine intermediate; for HPr 2 activity.

The protein resides in the cytoplasm. In terms of biological role, the phosphoenolpyruvate-dependent sugar phosphotransferase system (sugar PTS), a major carbohydrate active transport system, catalyzes the phosphorylation of incoming sugar substrates concomitantly with their translocation across the cell membrane. The enzyme II FruAB PTS system is involved in fructose transport. The polypeptide is Multiphosphoryl transfer protein (fruB) (Haemophilus influenzae (strain ATCC 51907 / DSM 11121 / KW20 / Rd)).